A 427-amino-acid chain; its full sequence is C4-dicarboxylate transport protein (427 aa).

Transmembrane regions (helical) follow at residues 5-25, 44-64, 76-96, 142-162, 184-206, 222-242, 307-327, 330-350, and 352-372; these read IFSSLYFQVLLAITLGVFLGH, LIKMIIAPVIFCTVVTGIAGM, IALLYFEVVSTIALVIGLCVV, IGAFASGNILQVLLFAVLFGF, VIFGIINMIMRLAPVGAFGAMAF, LIACFYVTCLLFIFMVLGSIA, IYLTMAAIFIAQATNTPLDLF, ITLLVVLLISSKGAAGVTGSG, and IVLAATISAVGHLPLAGLALI.

Belongs to the dicarboxylate/amino acid:cation symporter (DAACS) (TC 2.A.23) family.

Its subcellular location is the cell inner membrane. Functionally, responsible for the transport of dicarboxylates such as succinate, fumarate, and malate from the periplasm across the membrane. The chain is C4-dicarboxylate transport protein from Aeromonas salmonicida (strain A449).